Here is a 261-residue protein sequence, read N- to C-terminus: MTHQTHAYHMVNPSPWPLTGALSALLMTSGLIMWFHFNSTTLLMLGLTTNMLTMYQWWRDVIRESTFQGHHTPNVQKGLRYGMILFIISEVLFFTGFFWAFYHSSLAPTPELGGCWPPTGINPLNPLEVPLLNTSVLLASGVSITWAHHSLMEGNRNHMLQALFITIALGVYFTLLQASEYYEAPFTISDGVYGSTFFVATGFHGLHVIIGSTFLIVCFFRQLKFHFTSNHHFGFEAAAWYWHFVDVVWLFLYVSIYWWGS.

Residues 1–15 (MTHQTHAYHMVNPSP) lie on the Mitochondrial matrix side of the membrane. The chain crosses the membrane as a helical span at residues 16-34 (WPLTGALSALLMTSGLIMW). Topologically, residues 35–40 (FHFNST) are mitochondrial intermembrane. A helical membrane pass occupies residues 41–66 (TLLMLGLTTNMLTMYQWWRDVIREST). The Mitochondrial matrix portion of the chain corresponds to 67–72 (FQGHHT). The chain crosses the membrane as a helical span at residues 73–105 (PNVQKGLRYGMILFIISEVLFFTGFFWAFYHSS). The Mitochondrial intermembrane segment spans residues 106–128 (LAPTPELGGCWPPTGINPLNPLE). A helical transmembrane segment spans residues 129–152 (VPLLNTSVLLASGVSITWAHHSLM). Topologically, residues 153-155 (EGN) are mitochondrial matrix. A helical transmembrane segment spans residues 156-183 (RNHMLQALFITIALGVYFTLLQASEYYE). Topologically, residues 184 to 190 (APFTISD) are mitochondrial intermembrane. Residues 191–223 (GVYGSTFFVATGFHGLHVIIGSTFLIVCFFRQL) traverse the membrane as a helical segment. The Mitochondrial matrix segment spans residues 224–232 (KFHFTSNHH). The chain crosses the membrane as a helical span at residues 233–256 (FGFEAAAWYWHFVDVVWLFLYVSI). Over 257-261 (YWWGS) the chain is Mitochondrial intermembrane.

The protein belongs to the cytochrome c oxidase subunit 3 family. As to quaternary structure, component of the cytochrome c oxidase (complex IV, CIV), a multisubunit enzyme composed of 14 subunits. The complex is composed of a catalytic core of 3 subunits MT-CO1, MT-CO2 and MT-CO3, encoded in the mitochondrial DNA, and 11 supernumerary subunits COX4I, COX5A, COX5B, COX6A, COX6B, COX6C, COX7A, COX7B, COX7C, COX8 and NDUFA4, which are encoded in the nuclear genome. The complex exists as a monomer or a dimer and forms supercomplexes (SCs) in the inner mitochondrial membrane with NADH-ubiquinone oxidoreductase (complex I, CI) and ubiquinol-cytochrome c oxidoreductase (cytochrome b-c1 complex, complex III, CIII), resulting in different assemblies (supercomplex SCI(1)III(2)IV(1) and megacomplex MCI(2)III(2)IV(2)).

The protein resides in the mitochondrion inner membrane. It catalyses the reaction 4 Fe(II)-[cytochrome c] + O2 + 8 H(+)(in) = 4 Fe(III)-[cytochrome c] + 2 H2O + 4 H(+)(out). Component of the cytochrome c oxidase, the last enzyme in the mitochondrial electron transport chain which drives oxidative phosphorylation. The respiratory chain contains 3 multisubunit complexes succinate dehydrogenase (complex II, CII), ubiquinol-cytochrome c oxidoreductase (cytochrome b-c1 complex, complex III, CIII) and cytochrome c oxidase (complex IV, CIV), that cooperate to transfer electrons derived from NADH and succinate to molecular oxygen, creating an electrochemical gradient over the inner membrane that drives transmembrane transport and the ATP synthase. Cytochrome c oxidase is the component of the respiratory chain that catalyzes the reduction of oxygen to water. Electrons originating from reduced cytochrome c in the intermembrane space (IMS) are transferred via the dinuclear copper A center (CU(A)) of subunit 2 and heme A of subunit 1 to the active site in subunit 1, a binuclear center (BNC) formed by heme A3 and copper B (CU(B)). The BNC reduces molecular oxygen to 2 water molecules using 4 electrons from cytochrome c in the IMS and 4 protons from the mitochondrial matrix. The chain is Cytochrome c oxidase subunit 3 (MT-CO3) from Gazella subgutturosa (Goitred gazelle).